A 186-amino-acid chain; its full sequence is RIO-type serine/threonine-protein kinase Rio1 (186 aa).

Position 15 (Lys-15) interacts with ATP. The active-site Proton acceptor is the Asp-124. Mg(2+) is bound by residues Asn-129 and Asp-140. Residue Asp-140 is the 4-aspartylphosphate intermediate of the active site.

It belongs to the protein kinase superfamily. RIO-type Ser/Thr kinase family.

It catalyses the reaction L-seryl-[protein] + ATP = O-phospho-L-seryl-[protein] + ADP + H(+). It carries out the reaction L-threonyl-[protein] + ATP = O-phospho-L-threonyl-[protein] + ADP + H(+). The catalysed reaction is ATP + H2O = ADP + phosphate + H(+). Despite the protein kinase domain is proposed to act predominantly as an ATPase. This is RIO-type serine/threonine-protein kinase Rio1 (rio1) from Thermoplasma acidophilum (strain ATCC 25905 / DSM 1728 / JCM 9062 / NBRC 15155 / AMRC-C165).